A 510-amino-acid chain; its full sequence is RanBP-type and C3HC4-type zinc finger-containing protein 1 (510 aa).

At M1 the chain carries N-acetylmethionine. Positions 1-220 (MDEKTKKAEE…PGCEMCCRAR (220 aa)) are interaction with IRF3. An interaction with TAB2 region spans residues 1 to 270 (MDEKTKKAEE…NYLQHVQLDQ (270 aa)). A Phosphoserine modification is found at S50. The 65-residue stretch at 55–119 (IRLWVSVEDA…DQETLHSHGV (65 aa)) folds into the Ubiquitin-like domain. The tract at residues 69 to 131 (VTIWLTVRPD…NGDSAYLYLL (63 aa)) is interaction with RNF31. The disordered stretch occupies residues 160-192 (LTLQPRGPLEPGPPKPGVPQEPGRGQPDAVPEP). Pro residues predominate over residues 167–178 (PLEPGPPKPGVP). The RanBP2-type zinc-finger motif lies at 193–222 (PPVGWQCPGCTFINKPTRPGCEMCCRARPE). A coiled-coil region spans residues 233 to 261 (DEEERARLAGEEEALRQYQQRKQQQQEGN). Positions 278 to 506 (EPAECPVCYS…VNGIPCHPSC (229 aa)) are TRIAD supradomain. The Zn(2+) site is built by C282, C285, C300, H302, C305, C308, and C323. An RING-type 1 zinc finger spans residues 282 to 332 (CPVCYSVLAPGEAVVLRECLHTFCRECLQGTIRNSQEAEVSCPFIDNTYSC). A Phosphotyrosine modification is found at Y330. C332, C371, C376, C391, C394, C399, C402, H406, C411, C447, and C450 together coordinate Zn(2+). The segment at 351–411 (QRFLDLGISI…CKAIHEQMNC (61 aa)) adopts an IBR-type zinc-finger fold. The RING-type 2; atypical zinc-finger motif lies at 447 to 476 (CPQCQIVVQKKDGCDWIRCTVCHTEICWVT). C460 is a catalytic residue. Zn(2+) contacts are provided by C465 and C468.

It belongs to the RBR family. As to quaternary structure, component of the LUBAC complex (linear ubiquitin chain assembly complex) which consists of SHARPIN, RBCK1 and RNF31. LUBAC has a MW of approximately 600 kDa suggesting a heteromultimeric assembly of its subunits. Interacts with beta-I-type (PRKCB1) and zeta-type protein kinase C (PRKCZ). Interacts with UBE2L3. Interacts with PRKCH. Associates with the TNF-R1 signaling complex (TNF-RSC) in a stimulation-dependent manner. Interacts with EYA1, TAB2, TAB3, MAP3K7 TRAF6 and RIPK1. Interacts with IRF3. Interacts with IREB2 only in iron-rich conditions. In terms of assembly, (Microbial infection) Interacts with hepatitis B virus/HBV protein HBx; this interaction is required to activate transcription of the viral genome. In terms of processing, auto-ubiquitinated. Auto-ubiquitination leads to degradation by the proteasome. Post-translationally, phosphorylated. In vitro, phosphorylation inhibits auto-ubiquitination activity. (Microbial infection) Ubiquitinated by S.flexneri E3 ubiquitin-protein ligases IpaH1.4 and IpaH2.5, leading to its degradation by the proteasome, thereby preventing formation of the bacterial ubiquitin coat and activation of innate immunity.

It carries out the reaction [E2 ubiquitin-conjugating enzyme]-S-ubiquitinyl-L-cysteine + [acceptor protein]-L-lysine = [E2 ubiquitin-conjugating enzyme]-L-cysteine + [acceptor protein]-N(6)-ubiquitinyl-L-lysine.. It participates in protein modification; protein ubiquitination. In terms of biological role, E3 ubiquitin-protein ligase, which accepts ubiquitin from specific E2 ubiquitin-conjugating enzymes, such as UBE2L3/UBCM4, and then transfers it to substrates. Functions as an E3 ligase for oxidized IREB2 and both heme and oxygen are necessary for IREB2 ubiquitination. Promotes ubiquitination of TAB2 and IRF3 and their degradation by the proteasome. Component of the LUBAC complex which conjugates linear ('Met-1'-linked) polyubiquitin chains to substrates and plays a key role in NF-kappa-B activation and regulation of inflammation. LUBAC conjugates linear polyubiquitin to IKBKG and RIPK1 and is involved in activation of the canonical NF-kappa-B and the JNK signaling pathways. Linear ubiquitination mediated by the LUBAC complex interferes with TNF-induced cell death and thereby prevents inflammation. LUBAC is recruited to the TNF-R1 signaling complex (TNF-RSC) following polyubiquitination of TNF-RSC components by BIRC2 and/or BIRC3 and to conjugate linear polyubiquitin to IKBKG and possibly other components contributing to the stability of the complex. The LUBAC complex is also involved in innate immunity by conjugating linear polyubiquitin chains at the surface of bacteria invading the cytosol to form the ubiquitin coat surrounding bacteria. LUBAC is not able to initiate formation of the bacterial ubiquitin coat, and can only promote formation of linear polyubiquitins on pre-existing ubiquitin. The bacterial ubiquitin coat acts as an 'eat-me' signal for xenophagy and promotes NF-kappa-B activation. Together with OTULIN, the LUBAC complex regulates the canonical Wnt signaling during angiogenesis. Binds polyubiquitin of different linkage types. The protein is RanBP-type and C3HC4-type zinc finger-containing protein 1 (RBCK1) of Homo sapiens (Human).